The following is a 601-amino-acid chain: Elongation factor 4 (601 aa).

Residues 6 to 188 (NRIRNFCIIA…QVVTKIAPPK (183 aa)) form the tr-type G domain. GTP is bound by residues 18–23 (DHGKST) and 135–138 (NKID).

It belongs to the TRAFAC class translation factor GTPase superfamily. Classic translation factor GTPase family. LepA subfamily.

The protein resides in the cell membrane. The catalysed reaction is GTP + H2O = GDP + phosphate + H(+). In terms of biological role, required for accurate and efficient protein synthesis under certain stress conditions. May act as a fidelity factor of the translation reaction, by catalyzing a one-codon backward translocation of tRNAs on improperly translocated ribosomes. Back-translocation proceeds from a post-translocation (POST) complex to a pre-translocation (PRE) complex, thus giving elongation factor G a second chance to translocate the tRNAs correctly. Binds to ribosomes in a GTP-dependent manner. In Desulforamulus reducens (strain ATCC BAA-1160 / DSM 100696 / MI-1) (Desulfotomaculum reducens), this protein is Elongation factor 4.